The sequence spans 396 residues: GPN-loop GTPase 1 (396 aa).

Residues 1-13 (MSETTATSTTTTK) are compositionally biased toward low complexity. The interval 1 to 30 (MSETTATSTTTTKTTDKDNVNNNNNNENKE) is disordered. GTP is bound at residue 44–49 (GSGKTT). The Gly-Pro-Asn (GPN)-loop; involved in dimer interface motif lies at 101–103 (GPN). GTP is bound at residue 204-207 (NKID). Positions 284–387 (YKADLEKIKK…ERLEDQRAYE (104 aa)) form a coiled coil. Positions 325–342 (DFKKEKKRENQEKTKNIY) are enriched in basic and acidic residues. The disordered stretch occupies residues 325 to 396 (DFKKEKKREN…ESLMSSIKKI (72 aa)). The span at 343-380 (DDEEDDYRDDRDMEDSGEYESYEDEQEEGDYENEEERL) shows a compositional bias: acidic residues.

It belongs to the GPN-loop GTPase family. In terms of assembly, heterodimer with gpn3. Binds to RNA polymerase II (RNAPII).

The protein resides in the cytoplasm. It localises to the nucleus. Its function is as follows. Small GTPase required for proper nuclear import of RNA polymerase II (RNAPII). May act at an RNAP assembly step prior to nuclear import. In Dictyostelium discoideum (Social amoeba), this protein is GPN-loop GTPase 1 (gpn1).